Reading from the N-terminus, the 132-residue chain is MTAGAGGSPPTRRCPATEDRAPATVATPSSADPTASRAVSWWSVHEHVAPVLDAAGSWPMAGTPAWRQLDDADPRKWAAICDAARHWALRVETCQEAMAQASRDVSAAADWPGIAREIVRRRGVYIPRAGVA.

The interval 1–34 (MTAGAGGSPPTRRCPATEDRAPATVATPSSADPT) is disordered.

To M.tuberculosis Rv2656c.

This is an uncharacterized protein from Mycobacterium tuberculosis (strain CDC 1551 / Oshkosh).